An 896-amino-acid chain; its full sequence is Alanine--tRNA ligase (896 aa).

Residues histidine 574, histidine 578, cysteine 677, and histidine 681 each coordinate Zn(2+).

The protein belongs to the class-II aminoacyl-tRNA synthetase family. Requires Zn(2+) as cofactor.

The protein localises to the cytoplasm. It carries out the reaction tRNA(Ala) + L-alanine + ATP = L-alanyl-tRNA(Ala) + AMP + diphosphate. In terms of biological role, catalyzes the attachment of alanine to tRNA(Ala) in a two-step reaction: alanine is first activated by ATP to form Ala-AMP and then transferred to the acceptor end of tRNA(Ala). Also edits incorrectly charged Ser-tRNA(Ala) and Gly-tRNA(Ala) via its editing domain. This chain is Alanine--tRNA ligase, found in Mycoplasma mycoides subsp. mycoides SC (strain CCUG 32753 / NCTC 10114 / PG1).